Here is a 36-residue protein sequence, read N- to C-terminus: Photosystem I reaction center subunit VIII (36 aa).

The helical transmembrane segment at 8–28 (AILVPIVGLVFPALSMALFFI) threads the bilayer.

The protein belongs to the PsaI family.

The protein resides in the plastid. The protein localises to the chloroplast thylakoid membrane. Functionally, may help in the organization of the PsaL subunit. The chain is Photosystem I reaction center subunit VIII from Phaeodactylum tricornutum (strain CCAP 1055/1).